Consider the following 504-residue polypeptide: WD repeat-containing protein 55 homolog (504 aa).

Over residues 32–49 the composition is skewed to acidic residues; that stretch reads QEVVNESDSEIGEYDLGD. The interval 32–135 is disordered; that stretch reads QEVVNESDSE…NAFDMDEDDE (104 aa). Positions 66 to 76 are enriched in polar residues; the sequence is DSISSDGSFNP. Residues 77-95 are compositionally biased toward acidic residues; it reads NDEDSDTDSDDSMLDEPDE. The span at 114-124 shows a compositional bias: polar residues; sequence SGSSNRNQDSD. WD repeat units follow at residues 158 to 197, 202 to 241, 245 to 283, 286 to 325, 328 to 367, and 412 to 451; these read KLED…NKLL, VHAK…LKKL, AHDD…SIFE, EIED…LYVQ, PYEE…YHCD, and QHNM…DFGD. A disordered region spans residues 484–504; the sequence is AKEDNNDNENDDATAGPSNTT.

This sequence belongs to the WD repeat WDR55 family.

The polypeptide is WD repeat-containing protein 55 homolog (Drosophila willistoni (Fruit fly)).